A 364-amino-acid chain; its full sequence is Protein-glutamate methylesterase/protein-glutamine glutaminase 3 (364 aa).

A Response regulatory domain is found at 7–124 (RVLIVDDSAS…THALLEASAR (118 aa)). Position 58 is a 4-aspartylphosphate (D58). Positions 167–358 (PTTERLVCIG…REIMLWQDAK (192 aa)) constitute a CheB-type methylesterase domain. Active-site residues include S178, H204, and D300.

It belongs to the CheB family. Phosphorylated by CheA. Phosphorylation of the N-terminal regulatory domain activates the methylesterase activity.

The protein resides in the cytoplasm. The enzyme catalyses [protein]-L-glutamate 5-O-methyl ester + H2O = L-glutamyl-[protein] + methanol + H(+). It carries out the reaction L-glutaminyl-[protein] + H2O = L-glutamyl-[protein] + NH4(+). Its function is as follows. Involved in chemotaxis. Part of a chemotaxis signal transduction system that modulates chemotaxis in response to various stimuli. Catalyzes the demethylation of specific methylglutamate residues introduced into the chemoreceptors (methyl-accepting chemotaxis proteins or MCP) by CheR. Also mediates the irreversible deamidation of specific glutamine residues to glutamic acid. The sequence is that of Protein-glutamate methylesterase/protein-glutamine glutaminase 3 from Rhodopseudomonas palustris (strain BisB18).